A 194-amino-acid polypeptide reads, in one-letter code: Probable GTP-binding protein EngB (194 aa).

The region spanning 22–194 (DLPEFALAGR…KFWDWIEDKM (173 aa)) is the EngB-type G domain. Residues 30-37 (GRSNVGKS), 57-61 (GKTQT), 75-78 (DVPG), 142-145 (TKMD), and 175-177 (FSS) each bind GTP. S37 and T59 together coordinate Mg(2+).

The protein belongs to the TRAFAC class TrmE-Era-EngA-EngB-Septin-like GTPase superfamily. EngB GTPase family. Mg(2+) is required as a cofactor.

Necessary for normal cell division and for the maintenance of normal septation. This Lactobacillus gasseri (strain ATCC 33323 / DSM 20243 / BCRC 14619 / CIP 102991 / JCM 1131 / KCTC 3163 / NCIMB 11718 / NCTC 13722 / AM63) protein is Probable GTP-binding protein EngB.